We begin with the raw amino-acid sequence, 555 residues long: Cytochrome P450 monooxygeanse terQ (555 aa).

A helical membrane pass occupies residues 10–30 (VPAHAWPTITVAGAVMVVVLL). A heme-binding site is contributed by Cys-479. The disordered stretch occupies residues 535–555 (DAGNTARVDPGAPDGVASEPS).

This sequence belongs to the cytochrome P450 family. The cofactor is heme.

Its subcellular location is the membrane. Its pathway is secondary metabolite biosynthesis. Its function is as follows. Cytochrome P450 monooxygeanse; part of the gene cluster that mediates the biosynthesis of terpendoles, indole-diterpene (IDT) mycotoxins including terpendole I, terpendole K, terpendole C, as well as the kinesin Eg5 inhibitor terpendole E. TerQ is a C11-hydroxylating enzyme that converts paspalline into terpendole E. Is also able to hydroxylate 13-desoxyterpendole I at C-13 to produce terpendole I. Terpendoles biosynthesis begins with the synthesis of geranylgeranyl diphosphate (GGPP) by a yet unidentified GGPP synthase. Condensation of indole-3-glycerol phosphate with GGPP by the prenyltransferase terC then forms 3-geranylgeranylindole (3-GGI), followed by epoxidation and cyclization of this intermediate (by the FAD-dependent monooxygeanse terM and the terpene cyclase terB) to form paspaline. The cytochrome monooxygenase terQ then hydroxylates paspalline at C-11 to yield terpendole E. The cytochrome monooxygenase terP converts terpendole E to 13-desoxyterpendole I, and terQ converts 13-desoxyterpendole I into terpendole I. TerF and terK are required for conversion of terpendole I to terpendole C which is further converted to terpendole K. The polypeptide is Cytochrome P450 monooxygeanse terQ (Tolypocladium album (Soil fungus)).